The primary structure comprises 359 residues: uncharacterized protein (359 aa).

The Protein kinase domain maps to 43-309; sequence YHLIRKLGSG…VLDFLGDDWG (267 aa). Residues 49-57 and Lys72 contribute to the ATP site; that span reads LGSGSYGRV. Asp163 (proton acceptor) is an active-site residue. The tract at residues 314 to 359 is disordered; that stretch reads REGPGVLGSAVSYEDREEGGSSLEEWTDEGDDSKSGGRTGTDGGAP. Gly residues predominate over residues 350 to 359; the sequence is GRTGTDGGAP.

It belongs to the protein kinase superfamily. Ser/Thr protein kinase family. STKL subfamily.

The enzyme catalyses L-seryl-[protein] + ATP = O-phospho-L-seryl-[protein] + ADP + H(+). It catalyses the reaction L-threonyl-[protein] + ATP = O-phospho-L-threonyl-[protein] + ADP + H(+). This is an uncharacterized protein from Homo sapiens (Human).